Consider the following 617-residue polypeptide: 1-deoxy-D-xylulose-5-phosphate synthase (617 aa).

Residues His-80 and 121 to 123 (GHS) each bind thiamine diphosphate. Asp-152 contacts Mg(2+). Residues 153–154 (GA), Asn-181, Tyr-277, and Glu-360 each bind thiamine diphosphate. Asn-181 is a binding site for Mg(2+).

This sequence belongs to the transketolase family. DXPS subfamily. Homodimer. Mg(2+) serves as cofactor. The cofactor is thiamine diphosphate.

It catalyses the reaction D-glyceraldehyde 3-phosphate + pyruvate + H(+) = 1-deoxy-D-xylulose 5-phosphate + CO2. It participates in metabolic intermediate biosynthesis; 1-deoxy-D-xylulose 5-phosphate biosynthesis; 1-deoxy-D-xylulose 5-phosphate from D-glyceraldehyde 3-phosphate and pyruvate: step 1/1. Its function is as follows. Catalyzes the acyloin condensation reaction between C atoms 2 and 3 of pyruvate and glyceraldehyde 3-phosphate to yield 1-deoxy-D-xylulose-5-phosphate (DXP). This is 1-deoxy-D-xylulose-5-phosphate synthase from Blochmanniella floridana.